Consider the following 66-residue polypeptide: Large ribosomal subunit protein bL35 (66 aa).

The tract at residues 22–41 (VMSAQRGKRHGMIKRTKKQI) is disordered. Positions 27 to 41 (RGKRHGMIKRTKKQI) are enriched in basic residues.

Belongs to the bacterial ribosomal protein bL35 family.

The chain is Large ribosomal subunit protein bL35 from Rhodopseudomonas palustris (strain TIE-1).